A 401-amino-acid chain; its full sequence is Aspartokinase (401 aa).

The protein belongs to the aspartokinase family.

It carries out the reaction L-aspartate + ATP = 4-phospho-L-aspartate + ADP. Its pathway is amino-acid biosynthesis; L-lysine biosynthesis via DAP pathway; (S)-tetrahydrodipicolinate from L-aspartate: step 1/4. The protein operates within amino-acid biosynthesis; L-methionine biosynthesis via de novo pathway; L-homoserine from L-aspartate: step 1/3. It functions in the pathway amino-acid biosynthesis; L-threonine biosynthesis; L-threonine from L-aspartate: step 1/5. This is Aspartokinase (lysC) from Rickettsia conorii (strain ATCC VR-613 / Malish 7).